The sequence spans 284 residues: D-tagatose-1,6-bisphosphate aldolase subunit GatY (284 aa).

The active-site Proton donor is Asp-82. The Zn(2+) site is built by His-83 and His-180. Cys-181 is a binding site for dihydroxyacetone phosphate. His-208 lines the Zn(2+) pocket. Dihydroxyacetone phosphate is bound by residues 209 to 211 (GAS) and 230 to 233 (NVAT).

It belongs to the class II fructose-bisphosphate aldolase family. TagBP aldolase GatY subfamily. Forms a complex with GatZ. It depends on Zn(2+) as a cofactor.

The enzyme catalyses D-tagatofuranose 1,6-bisphosphate = D-glyceraldehyde 3-phosphate + dihydroxyacetone phosphate. The protein operates within carbohydrate metabolism; D-tagatose 6-phosphate degradation; D-glyceraldehyde 3-phosphate and glycerone phosphate from D-tagatose 6-phosphate: step 2/2. Catalytic subunit of the tagatose-1,6-bisphosphate aldolase GatYZ, which catalyzes the reversible aldol condensation of dihydroxyacetone phosphate (DHAP or glycerone-phosphate) with glyceraldehyde 3-phosphate (G3P) to produce tagatose 1,6-bisphosphate (TBP). Requires GatZ subunit for full activity and stability. Is involved in the catabolism of galactitol. This chain is D-tagatose-1,6-bisphosphate aldolase subunit GatY, found in Salmonella paratyphi A (strain ATCC 9150 / SARB42).